A 310-amino-acid chain; its full sequence is HPr kinase/phosphorylase 1 (310 aa).

Residues His-139 and Lys-160 contribute to the active site. 154 to 161 (GQSGVGKS) lines the ATP pocket. Ser-161 provides a ligand contact to Mg(2+). The active-site Proton acceptor; for phosphorylation activity. Proton donor; for dephosphorylation activity is Asp-178. The segment at 202–211 (LEIRGLGIIN) is important for the catalytic mechanism of both phosphorylation and dephosphorylation. Residue Glu-203 coordinates Mg(2+). Residue Arg-244 is part of the active site. The interval 265–270 (PVRPGR) is important for the catalytic mechanism of dephosphorylation.

Belongs to the HPrK/P family. As to quaternary structure, homohexamer. Requires Mg(2+) as cofactor.

It catalyses the reaction [HPr protein]-L-serine + ATP = [HPr protein]-O-phospho-L-serine + ADP + H(+). It carries out the reaction [HPr protein]-O-phospho-L-serine + phosphate + H(+) = [HPr protein]-L-serine + diphosphate. In terms of biological role, catalyzes the ATP- as well as the pyrophosphate-dependent phosphorylation of a specific serine residue in HPr, a phosphocarrier protein of the phosphoenolpyruvate-dependent sugar phosphotransferase system (PTS). HprK/P also catalyzes the pyrophosphate-producing, inorganic phosphate-dependent dephosphorylation (phosphorolysis) of seryl-phosphorylated HPr (P-Ser-HPr). The two antagonistic activities of HprK/P are regulated by several intracellular metabolites, which change their concentration in response to the absence or presence of rapidly metabolisable carbon sources (glucose, fructose, etc.) in the growth medium. Also phosphorylates/dephosphorylates the HPr-like catabolite repression protein crh on a specific serine residue. Therefore, by controlling the phosphorylation state of HPr and crh, HPrK/P is a sensor enzyme that plays a major role in the regulation of carbon metabolism and sugar transport: it mediates carbon catabolite repression (CCR), and regulates PTS-catalyzed carbohydrate uptake and inducer exclusion. The polypeptide is HPr kinase/phosphorylase 1 (hprK1) (Oceanobacillus iheyensis (strain DSM 14371 / CIP 107618 / JCM 11309 / KCTC 3954 / HTE831)).